A 166-amino-acid polypeptide reads, in one-letter code: Large ribosomal subunit protein uL10 (166 aa).

Belongs to the universal ribosomal protein uL10 family. Part of the ribosomal stalk of the 50S ribosomal subunit. The N-terminus interacts with L11 and the large rRNA to form the base of the stalk. The C-terminus forms an elongated spine to which L12 dimers bind in a sequential fashion forming a multimeric L10(L12)X complex.

In terms of biological role, forms part of the ribosomal stalk, playing a central role in the interaction of the ribosome with GTP-bound translation factors. The sequence is that of Large ribosomal subunit protein uL10 from Flavobacterium psychrophilum (strain ATCC 49511 / DSM 21280 / CIP 103535 / JIP02/86).